We begin with the raw amino-acid sequence, 382 residues long: S-adenosylmethionine synthase (382 aa).

His-16 contributes to the ATP binding site. Asp-18 is a Mg(2+) binding site. Glu-44 is a binding site for K(+). L-methionine is bound by residues Glu-57 and Gln-100. Positions 100–110 are flexible loop; sequence QSPDIAQGVDN. ATP is bound by residues 165–167, 231–232, Asp-240, 246–247, and Lys-267; these read DAK, RF, and RK. Residue Asp-240 participates in L-methionine binding. Residue Lys-271 coordinates L-methionine.

This sequence belongs to the AdoMet synthase family. Homotetramer; dimer of dimers. The cofactor is Mg(2+). K(+) is required as a cofactor.

It is found in the cytoplasm. The enzyme catalyses L-methionine + ATP + H2O = S-adenosyl-L-methionine + phosphate + diphosphate. It functions in the pathway amino-acid biosynthesis; S-adenosyl-L-methionine biosynthesis; S-adenosyl-L-methionine from L-methionine: step 1/1. In terms of biological role, catalyzes the formation of S-adenosylmethionine (AdoMet) from methionine and ATP. The overall synthetic reaction is composed of two sequential steps, AdoMet formation and the subsequent tripolyphosphate hydrolysis which occurs prior to release of AdoMet from the enzyme. This chain is S-adenosylmethionine synthase, found in Legionella pneumophila (strain Lens).